The primary structure comprises 483 residues: Regulatory protein ViaA (483 aa).

The protein belongs to the ViaA family. As to quaternary structure, homodimer. Interacts with RavA.

The protein localises to the cytoplasm. In terms of biological role, component of the RavA-ViaA chaperone complex, which may act on the membrane to optimize the function of some of the respiratory chains. ViaA stimulates the ATPase activity of RavA. In Shigella sonnei (strain Ss046), this protein is Regulatory protein ViaA.